A 373-amino-acid polypeptide reads, in one-letter code: Opsin Rh1 (373 aa).

Over 1-54 (MDSFAAVATQLGPHFAALSNGSVVDKVTPDMAHLISPYWNQFPAMDPIWAKILT) the chain is Extracellular. A glycan (N-linked (GlcNAc...) asparagine) is linked at N20. The chain crosses the membrane as a helical span at residues 55–75 (AYMIIIGMISWCGNGVVIYIF). At 76 to 86 (ATTKSLRTPAN) the chain is on the cytoplasmic side. Residues 87–107 (LLVINLAISDFGIMITNTPMM) form a helical membrane-spanning segment. The Extracellular portion of the chain corresponds to 108–124 (GINLYFETWVLGPMMCD). A disulfide bridge links C123 with C200. A helical transmembrane segment spans residues 125-145 (IYAGLGSAFGCSSIWSMCMIS). At 146–162 (LDRYQVIVKGMAGRPMT) the chain is on the cytoplasmic side. A helical membrane pass occupies residues 163-183 (IPLALGKIAYIWFMSSIWCLA). At 184–219 (PVFGWSRYVPEGNLTSCGIDYLERDWNPRSYLIFYS) the chain is on the extracellular side. N-linked (GlcNAc...) asparagine glycosylation is present at N196. The helical transmembrane segment at 220 to 240 (IFVYYIPLFLICYSYWFIIAA) threads the bilayer. Over 241–276 (VSAHEKAMREQAKKMNVKSLRSSEDADKSAEGKLAK) the chain is Cytoplasmic. Residues 277–297 (VALVTISLWFMAWTPYLVINC) traverse the membrane as a helical segment. Residues 298-308 (MGLFKFEGLTP) lie on the Extracellular side of the membrane. Residues 309-331 (LNTIWGACFAKSAACYNPIVYGI) traverse the membrane as a helical segment. At K319 the chain carries N6-(retinylidene)lysine. Residues 332–373 (SHPKYRLALKEKCPCCVFGKVDDGKSSEAQSQATNSEAESKA) are Cytoplasmic-facing. The disordered stretch occupies residues 354 to 373 (DGKSSEAQSQATNSEAESKA). Residues 358-373 (SEAQSQATNSEAESKA) are compositionally biased toward polar residues.

This sequence belongs to the G-protein coupled receptor 1 family. Opsin subfamily. Phosphorylated on some or all of the serine and threonine residues present in the C-terminal region.

Its subcellular location is the cell projection. It localises to the rhabdomere membrane. Visual pigments are the light-absorbing molecules that mediate vision. They consist of an apoprotein, opsin, covalently linked to cis-retinal. This chain is Opsin Rh1 (ninaE), found in Drosophila pseudoobscura pseudoobscura (Fruit fly).